The chain runs to 212 residues: Adenylate kinase (212 aa).

10–15 serves as a coordination point for ATP; it reads GAGKGT. An NMP region spans residues 30–59; that stretch reads STGDMFRAAMANQTEMGRLAKSYIDKGELV. Residues Thr-31, Arg-36, 57 to 59, 86 to 89, and Gln-93 each bind AMP; these read ELV and GYPR. Positions 127 to 159 are LID; the sequence is GRIINRKTGETFHKVFNPPVDYKEEDYYQREDD. ATP is bound by residues Arg-128 and 137–138; that span reads TF. 2 residues coordinate AMP: Arg-156 and Arg-167. Residue Gln-195 coordinates ATP.

Monomer.

The protein localises to the cytoplasm. It carries out the reaction AMP + ATP = 2 ADP. Its pathway is purine metabolism; AMP biosynthesis via salvage pathway; AMP from ADP: step 1/1. In terms of biological role, catalyzes the reversible transfer of the terminal phosphate group between ATP and AMP. Plays an important role in cellular energy homeostasis and in adenine nucleotide metabolism. In Streptococcus pyogenes serotype M6 (strain ATCC BAA-946 / MGAS10394), this protein is Adenylate kinase.